The primary structure comprises 432 residues: Trigger factor (432 aa).

In terms of domain architecture, PPIase FKBP-type spans 161 to 246; sequence GSRATIDFVG…LNKVEARELP (86 aa).

The protein belongs to the FKBP-type PPIase family. Tig subfamily.

Its subcellular location is the cytoplasm. It carries out the reaction [protein]-peptidylproline (omega=180) = [protein]-peptidylproline (omega=0). Its function is as follows. Involved in protein export. Acts as a chaperone by maintaining the newly synthesized protein in an open conformation. Functions as a peptidyl-prolyl cis-trans isomerase. In Vibrio atlanticus (strain LGP32) (Vibrio splendidus (strain Mel32)), this protein is Trigger factor.